A 168-amino-acid chain; its full sequence is Large ribosomal subunit protein uL10 (168 aa).

Belongs to the universal ribosomal protein uL10 family. Part of the ribosomal stalk of the 50S ribosomal subunit. The N-terminus interacts with L11 and the large rRNA to form the base of the stalk. The C-terminus forms an elongated spine to which L12 dimers bind in a sequential fashion forming a multimeric L10(L12)X complex.

Forms part of the ribosomal stalk, playing a central role in the interaction of the ribosome with GTP-bound translation factors. In Clostridium acetobutylicum (strain ATCC 824 / DSM 792 / JCM 1419 / IAM 19013 / LMG 5710 / NBRC 13948 / NRRL B-527 / VKM B-1787 / 2291 / W), this protein is Large ribosomal subunit protein uL10.